The sequence spans 122 residues: Flagellar protein FliT (122 aa).

Residues M1–K50 are required for homodimerization. The fliD binding stretch occupies residues I60 to R98.

The protein belongs to the FliT family. In terms of assembly, homodimer. Interacts with FliD and FlhC.

It localises to the cytoplasm. The protein resides in the cytosol. Dual-function protein that regulates the transcription of class 2 flagellar operons and that also acts as an export chaperone for the filament-capping protein FliD. As a transcriptional regulator, acts as an anti-FlhDC factor; it directly binds FlhC, thus inhibiting the binding of the FlhC/FlhD complex to class 2 promoters, resulting in decreased expression of class 2 flagellar operons. As a chaperone, effects FliD transition to the membrane by preventing its premature polymerization, and by directing it to the export apparatus. The sequence is that of Flagellar protein FliT from Salmonella schwarzengrund (strain CVM19633).